The primary structure comprises 669 residues: DNA ligase (669 aa).

NAD(+) is bound by residues 34–38, 83–84, and E117; these read DAEYD and SL. K119 functions as the N6-AMP-lysine intermediate in the catalytic mechanism. Positions 140, 177, 293, and 317 each coordinate NAD(+). Positions 411, 414, 429, and 434 each coordinate Zn(2+). Residues 591-669 form the BRCT domain; sequence RLGGRFTGKT…EDEFLKMLEG (79 aa).

It belongs to the NAD-dependent DNA ligase family. LigA subfamily. Requires Mg(2+) as cofactor. Mn(2+) serves as cofactor.

The enzyme catalyses NAD(+) + (deoxyribonucleotide)n-3'-hydroxyl + 5'-phospho-(deoxyribonucleotide)m = (deoxyribonucleotide)n+m + AMP + beta-nicotinamide D-nucleotide.. DNA ligase that catalyzes the formation of phosphodiester linkages between 5'-phosphoryl and 3'-hydroxyl groups in double-stranded DNA using NAD as a coenzyme and as the energy source for the reaction. It is essential for DNA replication and repair of damaged DNA. The polypeptide is DNA ligase (Geotalea daltonii (strain DSM 22248 / JCM 15807 / FRC-32) (Geobacter daltonii)).